We begin with the raw amino-acid sequence, 718 residues long: Polyribonucleotide nucleotidyltransferase (718 aa).

2 residues coordinate Mg(2+): Asp491 and Asp497. Residues 558–617 form the KH domain; it reads PRMLTIKINPEKIRDVIGKGGATIRALTEETGTQIDISDDGTIVIASVDEGQAKEAQRRI. In terms of domain architecture, S1 motif spans 627–695; that stretch reads GQVYDGSVLR…EKGRLRLSVK (69 aa).

It belongs to the polyribonucleotide nucleotidyltransferase family. Requires Mg(2+) as cofactor.

The protein localises to the cytoplasm. The enzyme catalyses RNA(n+1) + phosphate = RNA(n) + a ribonucleoside 5'-diphosphate. Functionally, involved in mRNA degradation. Catalyzes the phosphorolysis of single-stranded polyribonucleotides processively in the 3'- to 5'-direction. The protein is Polyribonucleotide nucleotidyltransferase of Bordetella avium (strain 197N).